We begin with the raw amino-acid sequence, 184 residues long: MAAPWTGALLLLLASQAVSSAQALDEEEVPEGWVLLHVVQGQVGAGNYSYLRLNHEGKIVLRMRSLRGDADLYVSDSTLHPSFDEYELQSATCGADAVSIPAHFRRPVGIGVYGHRSHLESAFEMKVYYDATLEPHPFGETAYSDGTDASRKHAYAPEDASQEEESVLWTILISILKLVLEILF.

The first 23 residues, 1–23 (MAAPWTGALLLLLASQAVSSAQA), serve as a signal peptide directing secretion. Asparagine 47 is a glycosylation site (N-linked (GlcNAc...) asparagine).

It belongs to the UPF0669 family.

The protein resides in the secreted. Its function is as follows. May be involved in induction of apoptosis in CD4(+) T-cells, but not CD8(+) T-cells or hepatocytes. The chain is UPF0669 protein C6orf120 homolog from Bos taurus (Bovine).